The primary structure comprises 239 residues: Methylthioribulose-1-phosphate dehydratase (239 aa).

A substrate-binding site is contributed by C94. Positions 112 and 114 each coordinate Zn(2+). E136 (proton donor/acceptor) is an active-site residue. H192 is a binding site for Zn(2+).

Belongs to the aldolase class II family. MtnB subfamily. Zn(2+) is required as a cofactor.

It localises to the cytoplasm. The enzyme catalyses 5-(methylsulfanyl)-D-ribulose 1-phosphate = 5-methylsulfanyl-2,3-dioxopentyl phosphate + H2O. Its pathway is amino-acid biosynthesis; L-methionine biosynthesis via salvage pathway; L-methionine from S-methyl-5-thio-alpha-D-ribose 1-phosphate: step 2/6. Functionally, catalyzes the dehydration of methylthioribulose-1-phosphate (MTRu-1-P) into 2,3-diketo-5-methylthiopentyl-1-phosphate (DK-MTP-1-P). Functions in the methionine salvage pathway. May play a role in apoptosis. This is Methylthioribulose-1-phosphate dehydratase from Xenopus laevis (African clawed frog).